We begin with the raw amino-acid sequence, 355 residues long: UDP-N-acetylglucosamine--N-acetylmuramyl-(pentapeptide) pyrophosphoryl-undecaprenol N-acetylglucosamine transferase (355 aa).

UDP-N-acetyl-alpha-D-glucosamine is bound by residues 15 to 17 (TGG), asparagine 127, arginine 163, serine 191, isoleucine 244, 263 to 268 (ALTVSE), and glutamine 288.

The protein belongs to the glycosyltransferase 28 family. MurG subfamily.

The protein localises to the cell inner membrane. It catalyses the reaction di-trans,octa-cis-undecaprenyl diphospho-N-acetyl-alpha-D-muramoyl-L-alanyl-D-glutamyl-meso-2,6-diaminopimeloyl-D-alanyl-D-alanine + UDP-N-acetyl-alpha-D-glucosamine = di-trans,octa-cis-undecaprenyl diphospho-[N-acetyl-alpha-D-glucosaminyl-(1-&gt;4)]-N-acetyl-alpha-D-muramoyl-L-alanyl-D-glutamyl-meso-2,6-diaminopimeloyl-D-alanyl-D-alanine + UDP + H(+). It participates in cell wall biogenesis; peptidoglycan biosynthesis. In terms of biological role, cell wall formation. Catalyzes the transfer of a GlcNAc subunit on undecaprenyl-pyrophosphoryl-MurNAc-pentapeptide (lipid intermediate I) to form undecaprenyl-pyrophosphoryl-MurNAc-(pentapeptide)GlcNAc (lipid intermediate II). The chain is UDP-N-acetylglucosamine--N-acetylmuramyl-(pentapeptide) pyrophosphoryl-undecaprenol N-acetylglucosamine transferase from Salmonella paratyphi B (strain ATCC BAA-1250 / SPB7).